The following is a 997-amino-acid chain: Burkholderia TALE-like protein 2 (997 aa).

One copy of the Cryptic repeat -1 repeat lies at 19 to 50; sequence LSPLERIKIEKHYGGGATLAFISNQHDELAQV. The stretch at 51 to 83 is one Cryptic repeat 0 repeat; sequence LSRADILKIASYDCAAQALQAVLDCGPMLGKRG. Core repeat repeat units lie at residues 84–116, 117–147, 148–180, 181–213, 214–244, 245–277, 278–310, 311–343, 344–376, 377–409, 410–442, 443–475, 476–508, 509–539, 540–572, 573–605, 606–638, 639–671, 672–704, 705–737, 738–770, 771–803, 804–836, 837–869, 870–902, 903–935, and 936–967; these read FSRA…GKRG, FSQV…GERG, FSRG…RERG, FNQA…GKRG, FSRV…RKRG, FHPT…RERG, FSQA…CERG, FSQP…RERG, FSQA…HERG, FSQA…RERG, VRQA…RERG, FNQA…DKRG, FNPT…RERG, FNQA…RERG, FSQP…HKRG, FGQP…RERG, FSQS…RESD, FRQA…RQRG, FNRA…DERG, FNLT…QQRG, FNLT…RQRG, FNLI…RQRD, and LSLI…MQAG. The tract at residues 84–967 is buD domain; that stretch reads FSRADIVRIA…KYGPVLMQAG (884 aa). ANK repeat units lie at residues 772–801, 805–834, 838–867, and 871–900; these read RQAD…RLRQ, NRAS…TLDE, NLTN…TLQQ, and NLTD…TLRQ. The stretch at 968-997 is one Cryptic repeat +1 repeat; it reads RSNEEIVHVAARRGGAGRIRKMVALLLERQ.

It belongs to the transcription activator-like effector (TALE) family. Bat subfamily.

In terms of biological role, binds to DNA in a sequence-specific manner. This chain is Burkholderia TALE-like protein 2, found in Mycetohabitans rhizoxinica (strain DSM 19002 / CIP 109453 / HKI 454) (Paraburkholderia rhizoxinica).